A 683-amino-acid polypeptide reads, in one-letter code: 1,4-alpha-glucan-branching enzyme (683 aa).

(1,4-alpha-D-glucosyl)n is bound by residues Trp92 and Lys127. The active-site Nucleophile is the Asp342. The active-site Proton donor is Glu397.

The protein belongs to the glycosyl hydrolase 13 family. GlgB subfamily.

It is found in the cytoplasm. It carries out the reaction Transfers a segment of a (1-&gt;4)-alpha-D-glucan chain to a primary hydroxy group in a similar glucan chain.. It participates in glycan biosynthesis; glycogen biosynthesis. Its function is as follows. Glycogen-branching enzyme participates in the glycogen biosynthetic process along with glycogenin and glycogen synthase. Generates alpha-1,6-glucosidic branches from alpha-1,4-linked glucose chains, to increase solubility of the glycogen polymer. In Rhizophagus irregularis (strain DAOM 181602 / DAOM 197198 / MUCL 43194) (Arbuscular mycorrhizal fungus), this protein is 1,4-alpha-glucan-branching enzyme (GLC3).